A 141-amino-acid polypeptide reads, in one-letter code: Large ribosomal subunit protein uL16c (141 aa).

Over residues 1–17 (MLSPKRTKYRKPHRGNR) the composition is skewed to basic residues. Residues 1–21 (MLSPKRTKYRKPHRGNRKGQA) form a disordered region.

It belongs to the universal ribosomal protein uL16 family. In terms of assembly, part of the 50S ribosomal subunit.

Its subcellular location is the plastid. The protein resides in the chloroplast. This Ostreococcus tauri protein is Large ribosomal subunit protein uL16c.